A 122-amino-acid polypeptide reads, in one-letter code: Large ribosomal subunit protein bL12 (122 aa).

The protein belongs to the bacterial ribosomal protein bL12 family. Homodimer. Part of the ribosomal stalk of the 50S ribosomal subunit. Forms a multimeric L10(L12)X complex, where L10 forms an elongated spine to which 2 to 4 L12 dimers bind in a sequential fashion. Binds GTP-bound translation factors.

Functionally, forms part of the ribosomal stalk which helps the ribosome interact with GTP-bound translation factors. Is thus essential for accurate translation. The polypeptide is Large ribosomal subunit protein bL12 (Sulfurimonas denitrificans (strain ATCC 33889 / DSM 1251) (Thiomicrospira denitrificans (strain ATCC 33889 / DSM 1251))).